A 432-amino-acid chain; its full sequence is Hexane cyclase pydB (432 aa).

The first 20 residues, 1–20, serve as a signal peptide directing secretion; it reads MMHQSLGLGLVVFVAAPVVA. Residues asparagine 59, asparagine 78, asparagine 153, and asparagine 308 are each glycosylated (N-linked (GlcNAc...) asparagine).

The protein belongs to the Diels-Alderase family.

The protein operates within mycotoxin biosynthesis. Its function is as follows. Hexane cyclase; part of the gene cluster that mediates the biosynthesis of pyrrocidines, fungal natural products containing a macrocyclic para-cyclophane connected to a decahydrofluorene ring system that show potent antibiotic activities toward Gram-negative bacteria. Within the pathway, pydB functions synergistically with pydE, pydX and pydZ to form the cyclophane. The pathway begins with the PKS-NRPS pydA which, with the help of the trans-enoyl reductase pydC, synthesizes the polyketide-tyrosyl acyl thioester product which can be reductively off-loaded by the terminal reductase (R) domain in pydA. The alpha/beta hydrolase pydG is then required to catalyze the subsequent Knoevenagel condensation that affords the 3-pyrrolin-2-one ring, whereas the four proteins pydB, pydE, pydX and pydZ then function synergistically to form the cyclophane. PydB and the membrane-bound pydX and pydZ are lipid-binding proteins that can sequester and mold the pdyG product into the inverse S-shape. Binding of the medium chain reductase pydE to the complex would trigger the cascade oxidative cyclization. PydY is involved the Diels-Alder cycloaddition that forms the decahydrofluorene core. Additional non-enzymatic hydroxylation yields pyrrocidine A2 which can be further reduced into pyrrocidine B by an endogenous reductase. This is Hexane cyclase pydB from Acremonium sp.